The sequence spans 626 residues: Hormonally up-regulated neu tumor-associated kinase homolog B (626 aa).

Residues 1–2 and K17 each bind ATP; that span reads KV. The Protein kinase domain maps to 1–246; that stretch reads KVREGLHVGT…IQQALANRWL (246 aa). D112 acts as the Proton acceptor in catalysis. Residues 336–357 show a composition bias toward basic and acidic residues; the sequence is KYKMNKNSYEERRSKDLEKRGE. 3 disordered regions span residues 336 to 407, 477 to 574, and 590 to 615; these read KYKM…ESFG, VNRE…RSRG, and QVVS…PGYA. The span at 374–390 shows a compositional bias: polar residues; it reads SHRQSTCLTPQGHSSSK. Over residues 392 to 405 the composition is skewed to basic and acidic residues; sequence PIKERRSSKSERES. Polar residues predominate over residues 518–532; the sequence is DNTSPLKGHSNQASF. Residues 539–555 are compositionally biased toward low complexity; the sequence is SPSSPESMSPTSPHSPS. The segment covering 556–566 has biased composition (polar residues); the sequence is CNNNISGNLGS.

It belongs to the protein kinase superfamily. CAMK Ser/Thr protein kinase family. SNF1 subfamily. In terms of tissue distribution, in the egg, expressed predominantly in the animal hemisphere. This pattern of expression persists throughout the cleavage and blastula stages. At the gastrula stage, expression is restricted to the ectoderm. In later-stage embryos, expressed over the entire embryonic surface including the open neural plate at stage 15 and the neural tube at stage 22. In tadpoles, strongly expressed in the neural tube, motor neurons, brain regions and sensory organs (otic vesicle and eye). Also expressed in the perisomitic mesoderm, brachial arches and embryonic epidermis of tadpoles.

It carries out the reaction L-seryl-[protein] + ATP = O-phospho-L-seryl-[protein] + ADP + H(+). The enzyme catalyses L-threonyl-[protein] + ATP = O-phospho-L-threonyl-[protein] + ADP + H(+). The polypeptide is Hormonally up-regulated neu tumor-associated kinase homolog B (hunk-b) (Xenopus laevis (African clawed frog)).